A 348-amino-acid polypeptide reads, in one-letter code: MKNLLGSSIKDLENIALDYGQAAFRGRQIYSWIYNYRNKNKNIDQIEVLPLDFRKKLKDDGFKVSELSFQEKKLANDGTLKLLLSTNDNESIECVGIPTEKRLTACLSSQVGCPMDCKFCATGKEGLKRSLKASEILDQILFIENEMNRKVTNIVFMGMGEPLLNIDELLLSIRSINEDFQISQRKITVSTVAVPKMMSKLSARSFQILGNCQFTLAISLHASNQKTRETIIPSAKNYEIKNIIEDSKQFVKDTGRRVSFEYLMLSGVNDKLEHANELSNLLRGFQCHVNLIQYNQIDEVEFKRASLKNLQLFQSRLSNNGITVSFRKSRGLDKNAACGQLRQNARNK.

Catalysis depends on Glu-93, which acts as the Proton acceptor. Residues 99-333 enclose the Radical SAM core domain; it reads TEKRLTACLS…VSFRKSRGLD (235 aa). A disulfide bridge links Cys-106 with Cys-338. [4Fe-4S] cluster is bound by residues Cys-113, Cys-117, and Cys-120. S-adenosyl-L-methionine is bound by residues 160–161, Ser-190, 219–221, and Asn-295; these read GE and SLH. Cys-338 (S-methylcysteine intermediate) is an active-site residue.

The protein belongs to the radical SAM superfamily. RlmN family. The cofactor is [4Fe-4S] cluster.

The protein resides in the cytoplasm. The catalysed reaction is adenosine(2503) in 23S rRNA + 2 reduced [2Fe-2S]-[ferredoxin] + 2 S-adenosyl-L-methionine = 2-methyladenosine(2503) in 23S rRNA + 5'-deoxyadenosine + L-methionine + 2 oxidized [2Fe-2S]-[ferredoxin] + S-adenosyl-L-homocysteine. It carries out the reaction adenosine(37) in tRNA + 2 reduced [2Fe-2S]-[ferredoxin] + 2 S-adenosyl-L-methionine = 2-methyladenosine(37) in tRNA + 5'-deoxyadenosine + L-methionine + 2 oxidized [2Fe-2S]-[ferredoxin] + S-adenosyl-L-homocysteine. Functionally, specifically methylates position 2 of adenine 2503 in 23S rRNA and position 2 of adenine 37 in tRNAs. In Prochlorococcus marinus (strain MIT 9312), this protein is Probable dual-specificity RNA methyltransferase RlmN.